A 451-amino-acid chain; its full sequence is Bifunctional protein GlmU (451 aa).

The interval 1 to 229 (MQRHAIVLAA…FEEIMGVNDR (229 aa)) is pyrophosphorylase. UDP-N-acetyl-alpha-D-glucosamine is bound by residues 8-11 (LAAG), lysine 22, glutamine 72, and 77-78 (GT). Aspartate 102 serves as a coordination point for Mg(2+). Glycine 139, glutamate 154, and asparagine 227 together coordinate UDP-N-acetyl-alpha-D-glucosamine. Residue asparagine 227 coordinates Mg(2+). The linker stretch occupies residues 230-250 (VMLSEAEKAFRKRINEQHMKN). The N-acetyltransferase stretch occupies residues 251–451 (GVTIIDPVTT…QTTKEGYLKK (201 aa)). The UDP-N-acetyl-alpha-D-glucosamine site is built by arginine 332 and lysine 350. Histidine 362 (proton acceptor) is an active-site residue. Residues tyrosine 365 and asparagine 376 each coordinate UDP-N-acetyl-alpha-D-glucosamine. Residues 385–386 (NY), alanine 422, and arginine 439 each bind acetyl-CoA.

In the N-terminal section; belongs to the N-acetylglucosamine-1-phosphate uridyltransferase family. The protein in the C-terminal section; belongs to the transferase hexapeptide repeat family. In terms of assembly, homotrimer. The cofactor is Mg(2+).

It localises to the cytoplasm. The enzyme catalyses alpha-D-glucosamine 1-phosphate + acetyl-CoA = N-acetyl-alpha-D-glucosamine 1-phosphate + CoA + H(+). The catalysed reaction is N-acetyl-alpha-D-glucosamine 1-phosphate + UTP + H(+) = UDP-N-acetyl-alpha-D-glucosamine + diphosphate. It participates in nucleotide-sugar biosynthesis; UDP-N-acetyl-alpha-D-glucosamine biosynthesis; N-acetyl-alpha-D-glucosamine 1-phosphate from alpha-D-glucosamine 6-phosphate (route II): step 2/2. Its pathway is nucleotide-sugar biosynthesis; UDP-N-acetyl-alpha-D-glucosamine biosynthesis; UDP-N-acetyl-alpha-D-glucosamine from N-acetyl-alpha-D-glucosamine 1-phosphate: step 1/1. It functions in the pathway bacterial outer membrane biogenesis; LPS lipid A biosynthesis. In terms of biological role, catalyzes the last two sequential reactions in the de novo biosynthetic pathway for UDP-N-acetylglucosamine (UDP-GlcNAc). The C-terminal domain catalyzes the transfer of acetyl group from acetyl coenzyme A to glucosamine-1-phosphate (GlcN-1-P) to produce N-acetylglucosamine-1-phosphate (GlcNAc-1-P), which is converted into UDP-GlcNAc by the transfer of uridine 5-monophosphate (from uridine 5-triphosphate), a reaction catalyzed by the N-terminal domain. The sequence is that of Bifunctional protein GlmU from Staphylococcus saprophyticus subsp. saprophyticus (strain ATCC 15305 / DSM 20229 / NCIMB 8711 / NCTC 7292 / S-41).